A 282-amino-acid polypeptide reads, in one-letter code: Shikimate kinase (282 aa).

86–96 (PIKSGLSSSSA) is an ATP binding site.

The protein belongs to the GHMP kinase family. Archaeal shikimate kinase subfamily.

It is found in the cytoplasm. The catalysed reaction is shikimate + ATP = 3-phosphoshikimate + ADP + H(+). Its pathway is metabolic intermediate biosynthesis; chorismate biosynthesis; chorismate from D-erythrose 4-phosphate and phosphoenolpyruvate: step 5/7. This chain is Shikimate kinase (aroK), found in Methanocaldococcus jannaschii (strain ATCC 43067 / DSM 2661 / JAL-1 / JCM 10045 / NBRC 100440) (Methanococcus jannaschii).